The primary structure comprises 802 residues: MTASPESMGQKFRNMTANECFQSRSTVLQGQPFGGIPTVLLLNIILWVCVVLVYSFLRKAAWDYGRLALLIHNDSLTSLIYGEQSEKSSPSEVYLEAERRDKGFSTWFFNSLTMRDRDLINKCGEDARIYIMFQYHLIIFVLILCIPSLGIILPVNYIGSALDWSSHFGRTTIVNVSTESQFLWLHSIFAFMYFLTNFAFMGHHCLGFVPKKNLHFTRTLMITYVPTEIQDPETISKHFHEAYPGCVVTRVHFCYDVRNLIDLDDQRRHAMRGRLYYTAKAKKTGKVMIKVHPCSHLCFCKCWTCFKEVDAEQYYSELEEQLTDEFNAELNRVQLKRLDLIFVTFQDARTVKRIHNDYKYINCGRHPMQSSVTTIVKNNHWRVARAPHPKDIIWKHLSIRRFSWWARFIAINTSLFFLFFFLTTPAIIINTIDMYNVTRPIEKLQSPVVTQFFPSVLLWAFTVIMPLLVYFSAFLEAHWTRSNQNLIIMYKCYIFLVFMVVILPSMGLTSLDVFLRWLFDIYYLEHATIRFQCVFLPDNGAFFINYVITSALFGTGMELMRLGSLCTYCTRLFLSRSEPERVHIRKNLAMDFQFGREYAWMLNVFSVVMAYSITCPIIVPFGLLYLCMKHITDRYNMYYSYAPTKLNAQIHMAAVYQAIFAPLLGLFWMLFFSILRVGSLHSITLFSLSSIIISVIIAFSGVFLGKFRIAQQYEQPEEETETVFDVEPSSTTSTPTSLLYVATVLQEPELNLTPASSPARHTYGTMNSQPEEGEEESGLRGFARELDPAQFQEGLELEGQSH.

Residues 1 to 35 (MTASPESMGQKFRNMTANECFQSRSTVLQGQPFGG) are Extracellular-facing. Residues 36-60 (IPTVLLLNIILWVCVVLVYSFLRKA) traverse the membrane as a helical segment. Residues 61 to 124 (AWDYGRLALL…RDRDLINKCG (64 aa)) are Cytoplasmic-facing. Phosphoserine is present on residues Ser75 and Ser78. The chain crosses the membrane as a helical span at residues 125–157 (EDARIYIMFQYHLIIFVLILCIPSLGIILPVNY). The Extracellular portion of the chain corresponds to 158-180 (IGSALDWSSHFGRTTIVNVSTES). A helical transmembrane segment spans residues 181–205 (QFLWLHSIFAFMYFLTNFAFMGHHC). At 206 to 401 (LGFVPKKNLH…IIWKHLSIRR (196 aa)) the chain is on the cytoplasmic side. Residues 402 to 431 (FSWWARFIAINTSLFFLFFFLTTPAIIINT) form a helical membrane-spanning segment. Topologically, residues 432–446 (IDMYNVTRPIEKLQS) are extracellular. Residues 447–476 (PVVTQFFPSVLLWAFTVIMPLLVYFSAFLE) form a helical membrane-spanning segment. The Cytoplasmic segment spans residues 477–480 (AHWT). The chain crosses the membrane as a helical span at residues 481–517 (RSNQNLIIMYKCYIFLVFMVVILPSMGLTSLDVFLRW). Topologically, residues 518-540 (LFDIYYLEHATIRFQCVFLPDNG) are extracellular. A helical membrane pass occupies residues 541–573 (AFFINYVITSALFGTGMELMRLGSLCTYCTRLF). Residues 574-593 (LSRSEPERVHIRKNLAMDFQ) are Cytoplasmic-facing. Residues 594 to 612 (FGREYAWMLNVFSVVMAYS) form a helical membrane-spanning segment. Over 613-615 (ITC) the chain is Extracellular. Residues 616–640 (PIIVPFGLLYLCMKHITDRYNMYYS) form a helical membrane-spanning segment. The Cytoplasmic portion of the chain corresponds to 641 to 647 (YAPTKLN). The chain crosses the membrane as a helical span at residues 648 to 676 (AQIHMAAVYQAIFAPLLGLFWMLFFSILR). Topologically, residues 677 to 681 (VGSLH) are extracellular. Residues 682-702 (SITLFSLSSIIISVIIAFSGV) traverse the membrane as a helical segment. Topologically, residues 703–802 (FLGKFRIAQQ…EGLELEGQSH (100 aa)) are cytoplasmic. A disordered region spans residues 753–785 (TPASSPARHTYGTMNSQPEEGEEESGLRGFARE).

The protein belongs to the CSC1 (TC 1.A.17) family. In terms of assembly, monomer. Expressed in podocytes of kidney glomeruli.

The protein localises to the endoplasmic reticulum membrane. Its subcellular location is the cell membrane. It carries out the reaction Ca(2+)(in) = Ca(2+)(out). Functionally, acts as an osmosensitive cation channel preferentially activated upon hypotonic stress. In contrast to TMEM63B, does not show phospholipid scramblase activity. Enriched in mitochondria-ER contact sites where it may regulate the metabolite flux and organelles' morphologies in response to osmotic changes. In particular may regulate mitochondrial motility and function in motor neuron axons. Required for the functional integrity of the kidney glomerular filtration barrier. The protein is Osmosensitive cation channel TMEM63C (Tmem63c) of Rattus norvegicus (Rat).